We begin with the raw amino-acid sequence, 613 residues long: Coiled-coil domain-containing protein 116 (613 aa).

A disordered region spans residues 41-68 (KPGRVPHPPSTCGSSALQGQRRNKRHPQ). Polar residues predominate over residues 51-60 (TCGSSALQGQ). A coiled-coil region spans residues 79-104 (ESQVLDSLETVVEKATERMAAMKTEA). Disordered stretches follow at residues 329–395 (CRDG…AQVA), 509–541 (RQAS…QATE), and 565–613 (MSAC…EDGV). Phosphoserine is present on Ser-386. Polar residues predominate over residues 512-539 (SRLSTSHCSTETPSVQQEPATHTAQDQA). The segment covering 577 to 589 (KSKDMDNEGRDKA) has biased composition (basic and acidic residues). The span at 590–613 (EIEDEDEDEFKDEDQDEDKDEDGV) shows a compositional bias: acidic residues.

The protein resides in the cytoplasm. It is found in the cytoskeleton. It localises to the microtubule organizing center. The protein localises to the centrosome. The chain is Coiled-coil domain-containing protein 116 (CCDC116) from Homo sapiens (Human).